A 144-amino-acid chain; its full sequence is UPF0102 protein BPSL3274 (144 aa).

The disordered stretch occupies residues 1–28 (MCHAREASPGTGEPEAAPRDNFPREAGS). Over residues 16-28 (AAPRDNFPREAGS) the composition is skewed to basic and acidic residues.

Belongs to the UPF0102 family.

This is UPF0102 protein BPSL3274 from Burkholderia pseudomallei (strain K96243).